Here is a 60-residue protein sequence, read N- to C-terminus: Metallothionein (60 aa).

The residue at position 1 (M1) is an N-acetylmethionine. Residues 1–28 are beta; sequence MDPCECSKTGTCNCGGSCTCKNCSCTTC. A divalent metal cation is bound by residues C4, C6, C12, C14, C18, C20, C23, C25, C28, C32, C33, C35, C36, C40, C43, C47, C49, C54, C58, and C59. Positions 29-60 are alpha; the sequence is TKSCCPCCPSGCPKCASGCVCKGKTCDTTCCQ.

This sequence belongs to the metallothionein superfamily. Type 1 family.

Metallothioneins have a high content of cysteine residues that bind various heavy metals. This is Metallothionein (mt) from Pseudopleuronectes americanus (Winter flounder).